Here is a 470-residue protein sequence, read N- to C-terminus: Auxin transporter-like protein 3 (470 aa).

At 1 to 57 (MAAEKIETVVAGNYLEMEREEENISGNKKSSTKTKLSNFFWHGGSVYDAWFSCASNQ) the chain is on the cytoplasmic side. The helical transmembrane segment at 58-75 (VAQVLLTLPYSFSQLGMM) threads the bilayer. Topologically, residues 76-77 (SG) are extracellular. A helical membrane pass occupies residues 78–98 (ILFQLFYGLMGSWTAYLISVL). Topologically, residues 99-134 (YVEYRTRKEREKFDFRNHVIQWFEVLDGLLGKHWRN) are cytoplasmic. The chain crosses the membrane as a helical span at residues 135–155 (LGLIFNCTFLLFGSVIQLIAC). The Extracellular portion of the chain corresponds to 156–170 (ASNIYYINDKLDKRT). A helical membrane pass occupies residues 171–191 (WTYIFGACCATTVFIPSFHNY). A topological domain (cytoplasmic) is located at residue Arg192. A helical membrane pass occupies residues 193-213 (IWSFLGLAMTTYTSWYLTIAS). Topologically, residues 214–230 (LLHGQAEDVKHSGPTTM) are extracellular. Residues 231 to 251 (VLYFTGATNILYTFGGHAVTV) form a helical membrane-spanning segment. Residues 252–264 (EIMHAMWKPQKFK) are Cytoplasmic-facing. The chain crosses the membrane as a helical span at residues 265 to 285 (AIYLLATIYVLTLTLPSASAV). Topologically, residues 286–312 (YWAFGDKLLTHSNALSLLPKTGFRDTA) are extracellular. The chain crosses the membrane as a helical span at residues 313-333 (VILMLIHQFITFGFASTPLYF). Over 334–354 (VWEKLIGVHETKSMFKRAMAR) the chain is Cytoplasmic. Residues 355–375 (LPVVVPIWFLAIIFPFFGPIN) form a helical membrane-spanning segment. Ser376 is a topological domain (extracellular). A helical transmembrane segment spans residues 377–397 (AVGSLLVSFTVYIIPALAHML). Topologically, residues 398 to 426 (TFAPAPSRENAVERPPRVVGGWMGTYCIN) are cytoplasmic. A helical membrane pass occupies residues 427-447 (IFVVVWVFVVGFGFGGWASMV). At 448 to 470 (NFVRQIDTFGLFTKCYQCPPHKP) the chain is on the extracellular side.

It belongs to the amino acid/polyamine transporter 2 family. Amino acid/auxin permease (AAAP) (TC 2.A.18.1) subfamily.

The protein resides in the cell membrane. Carrier protein involved in proton-driven auxin influx. Mediates the formation of auxin gradient from developing leaves (site of auxin biosynthesis) to tips by contributing to the loading of auxin in vascular tissues and facilitating acropetal (base to tip) auxin transport within inner tissues of the root apex, and basipetal (tip to base) auxin transport within outer tissues of the root apex. The protein is Auxin transporter-like protein 3 (LAX3) of Arabidopsis thaliana (Mouse-ear cress).